The primary structure comprises 350 residues: Bifunctional methylenetetrahydrofolate dehydrogenase/cyclohydrolase, mitochondrial (350 aa).

The N-terminal 35 residues, 1 to 35 (MAATSLMSALAARLLQPAHSCSLRLRPFHLAAVRN), are a transit peptide targeting the mitochondrion. Lys-50 bears the N6-acetyllysine; alternate mark. Residue Lys-50 forms a Glycyl lysine isopeptide (Lys-Gly) (interchain with G-Cter in SUMO2); alternate linkage. Substrate is bound by residues 84–88 (YVLNK) and 131–133 (VQL). NAD(+)-binding positions include 200–202 (GRS) and Arg-233. 309-313 (PGGVG) lines the substrate pocket.

It belongs to the tetrahydrofolate dehydrogenase/cyclohydrolase family. Homodimer. The cofactor is Mg(2+).

The protein resides in the mitochondrion. The enzyme catalyses (6R)-5,10-methylene-5,6,7,8-tetrahydrofolate + NAD(+) = (6R)-5,10-methenyltetrahydrofolate + NADH. The catalysed reaction is (6R)-5,10-methenyltetrahydrofolate + H2O = (6R)-10-formyltetrahydrofolate + H(+). Its function is as follows. Although its dehydrogenase activity is NAD-specific, it can also utilize NADP at a reduced efficiency. This chain is Bifunctional methylenetetrahydrofolate dehydrogenase/cyclohydrolase, mitochondrial (MTHFD2), found in Homo sapiens (Human).